We begin with the raw amino-acid sequence, 456 residues long: Aromatic amino acid transport protein AroP (456 aa).

The Cytoplasmic segment spans residues 1-18; that stretch reads MEGQQHGEQLKRGLKNRH. Residues 19–39 form a helical membrane-spanning segment; the sequence is IQLIALGGAIGTGLFLGSASV. Residues 40–41 lie on the Periplasmic side of the membrane; the sequence is IQ. The chain crosses the membrane as a helical span at residues 42 to 62; the sequence is SAGPGIILGYAIAGFIAFLIM. Over 63 to 85 the chain is Cytoplasmic; sequence RQLGEMVVEEPVAGSFSHFAYKY. The chain crosses the membrane as a helical span at residues 86 to 106; it reads WGSFAGFASGWNYWVLYVLVA. The Periplasmic portion of the chain corresponds to 107–116; that stretch reads MAELTAVGKY. A helical membrane pass occupies residues 117-137; sequence IQFWYPEIPTWVSAAVFFVVI. The Cytoplasmic portion of the chain corresponds to 138 to 154; it reads NAINLTNVKVFGEMEFW. The chain crosses the membrane as a helical span at residues 155 to 175; the sequence is FAIIKVIAVVAMIIFGAWLLF. At 176 to 200 the chain is on the periplasmic side; that stretch reads SGNGGPQASVSNLWDQGGFLPHGFT. The helical transmembrane segment at 201 to 221 threads the bilayer; the sequence is GLVMMMAIIMFSFGGLELVGI. The Cytoplasmic portion of the chain corresponds to 222–239; that stretch reads TAAEADNPEQSIPKATNQ. The helical transmembrane segment at 240–260 threads the bilayer; it reads VIYRILIFYIGSLAVLLSLMP. Topologically, residues 261-270 are periplasmic; sequence WTRVTADTSP. A helical membrane pass occupies residues 271 to 291; that stretch reads FVLIFHELGDTFVANALNIVV. Topologically, residues 292-332 are cytoplasmic; the sequence is LTAALSVYNSCVYCNSRMLFGLAQQGNAPKALASVDKRGVP. Residues 333–353 traverse the membrane as a helical segment; sequence VNTILVSALVTALCVLINYLA. Topologically, residues 354–357 are periplasmic; it reads PESA. The chain crosses the membrane as a helical span at residues 358–378; the sequence is FGLLMALVVSALVINWAMISL. The Cytoplasmic portion of the chain corresponds to 379–398; it reads AHMKFRRAKQEQGVVTRFPA. A helical membrane pass occupies residues 399–419; it reads LLYPLGNWICLLFMAAVLVIM. Residues 420 to 424 lie on the Periplasmic side of the membrane; that stretch reads LMTPG. Residues 425–445 form a helical membrane-spanning segment; the sequence is MAISVYLIPVWLIVLGIGYLF. Residues 446 to 456 lie on the Cytoplasmic side of the membrane; the sequence is KEKTAKAVKAH.

This sequence belongs to the amino acid-polyamine-organocation (APC) superfamily. Amino acid transporter (AAT) (TC 2.A.3.1) family.

The protein resides in the cell inner membrane. The enzyme catalyses L-phenylalanine(in) + H(+)(in) = L-phenylalanine(out) + H(+)(out). It catalyses the reaction L-tryptophan(in) + H(+)(in) = L-tryptophan(out) + H(+)(out). The catalysed reaction is L-tyrosine(in) + H(+)(in) = L-tyrosine(out) + H(+)(out). Functionally, permease that is involved in the active transport across the cytoplasmic membrane of all three aromatic amino acids, phenylalanine, tyrosine and tryptophan. The protein is Aromatic amino acid transport protein AroP (aroP) of Escherichia coli O6:H1 (strain CFT073 / ATCC 700928 / UPEC).